A 365-amino-acid chain; its full sequence is MTITGIIAEFNPFHNGHKYLLDQAEGLKIVAMSGNFMQRGEPAIVDKWTRAQMALENGADLVVELPFLVSVQAADFFGQGSVDILDRLGIDSLAFGTEEVLDYQKIADLYTEKGAEMEKFVKNLPDSLSYPQKTQAMWKEFAGLDFSGNTPNHVLALAYAKAVAGRNIKLHPIQRQGAGYHSVNKDVDFASATALRQHQKDQDFLERFMPSVALFEQASKVIWEDYFPLLRYQILSNPDLTTIYQVNQEMAVRIKEAIKTAQSVEELVELVTTKRYTKARVRRLLTYILMQARESDLPEAIHVLGFTEKGRQHLKSLKGQVSLVSRIGKEPWDAMTQKVDQIYQLGKPSIAEQNFGRVPIRIETN.

ATP-binding positions include isoleucine 7–leucine 20, glycine 96, asparagine 152, and arginine 175.

This sequence belongs to the TmcAL family.

Its subcellular location is the cytoplasm. The enzyme catalyses cytidine(34) in elongator tRNA(Met) + acetate + ATP = N(4)-acetylcytidine(34) in elongator tRNA(Met) + AMP + diphosphate. In terms of biological role, catalyzes the formation of N(4)-acetylcytidine (ac(4)C) at the wobble position of elongator tRNA(Met), using acetate and ATP as substrates. First activates an acetate ion to form acetyladenylate (Ac-AMP) and then transfers the acetyl group to tRNA to form ac(4)C34. In Streptococcus pneumoniae (strain ATCC BAA-255 / R6), this protein is tRNA(Met) cytidine acetate ligase.